A 390-amino-acid chain; its full sequence is tRNA-specific 2-thiouridylase MnmA (390 aa).

ATP-binding positions include 33–40 (AMSGGVDS) and Met59. The Nucleophile role is filled by Cys131. A disulfide bond links Cys131 and Cys230. Residue Gly155 participates in ATP binding. Residues 180–182 (KDQ) are interaction with tRNA. Cys230 acts as the Cysteine persulfide intermediate in catalysis.

This sequence belongs to the MnmA/TRMU family.

It localises to the cytoplasm. The catalysed reaction is S-sulfanyl-L-cysteinyl-[protein] + uridine(34) in tRNA + AH2 + ATP = 2-thiouridine(34) in tRNA + L-cysteinyl-[protein] + A + AMP + diphosphate + H(+). Catalyzes the 2-thiolation of uridine at the wobble position (U34) of tRNA, leading to the formation of s(2)U34. The protein is tRNA-specific 2-thiouridylase MnmA of Symbiobacterium thermophilum (strain DSM 24528 / JCM 14929 / IAM 14863 / T).